The primary structure comprises 168 residues: Desumoylating isopeptidase 1 (168 aa).

A PPPDE domain is found at 7 to 149 (YPVKLYVYDL…FGQALRPLLD (143 aa)). His38 is a catalytic residue. Residues 83 to 91 (IFLEYLSSL) carry the Nuclear export signal 1 motif. Residue Cys108 is part of the active site. The Nuclear export signal 2 motif lies at 139 to 153 (PFGQALRPLLDSIQI).

Belongs to the DeSI family. Homodimer. Interacts with UBQLN4; leading to the export of UBQLN4 from the nucleus.

The protein resides in the cytoplasm. Its subcellular location is the nucleus. It carries out the reaction S-hexadecanoyl-L-cysteinyl-[protein] + H2O = L-cysteinyl-[protein] + hexadecanoate + H(+). With respect to regulation, palmostatin B inhibits its palmitoyl protein thioesterase activity. Protease which deconjugates SUMO1, SUMO2 and SUMO3 from some substrate proteins. Has isopeptidase but not SUMO-processing activity. Desumoylates ZBTB46. Collaborates with UBQLN4 in the export of ubiquitinated proteins from the nucleus to the cytoplasm. Exhibits palmitoyl protein thioesterase (S-depalmitoylation) activity towards synthetic substrates 4-methylumbelliferyl-6-S-palmitoyl-beta-D-glucopyranoside and S-depalmitoylation probe 5 (DPP-5). The sequence is that of Desumoylating isopeptidase 1 from Homo sapiens (Human).